Reading from the N-terminus, the 1310-residue chain is Angiotensin-converting enzyme (1310 aa).

Positions 1-33 (MGAAPGRRGPRLLRPPPPLLLLLLLLRPPPAAL) are cleaved as a signal peptide. Over 34 to 1260 (TLDPGLLPGD…GMNLDAQQAR (1227 aa)) the chain is Extracellular. Peptidase M2 domains are found at residues 45 to 628 (AADE…LGWP) and 647 to 1226 (VTDE…LGWP). 3 N-linked (GlcNAc...) asparagine glycosylation sites follow: asparagine 59, asparagine 79, and asparagine 151. An intrachain disulfide couples cysteine 162 to cysteine 170. Tyrosine 236 is a binding site for chloride. Asparagine 323 carries N-linked (GlcNAc...) asparagine glycosylation. A disulfide bridge connects residues cysteine 364 and cysteine 382. Histidine 395 is a binding site for Zn(2+). Glutamate 396 acts as the Proton acceptor 1 in catalysis. Positions 399 and 422 each coordinate Zn(2+). 2 N-linked (GlcNAc...) asparagine glycosylation sites follow: asparagine 449 and asparagine 513. Histidine 524 serves as the catalytic Proton donor 1. Chloride is bound at residue arginine 533. The cysteines at positions 549 and 561 are disulfide-linked. Asparagine 681, asparagine 699, and asparagine 718 each carry an N-linked (GlcNAc...) asparagine glycan. An intrachain disulfide couples cysteine 761 to cysteine 767. 2 residues coordinate chloride: arginine 795 and tyrosine 833. Residue asparagine 946 is glycosylated (N-linked (GlcNAc...) asparagine). A disulfide bridge connects residues cysteine 961 and cysteine 979. Histidine 992 is a binding site for Zn(2+). Catalysis depends on glutamate 993, which acts as the Proton acceptor 2. The Zn(2+) site is built by histidine 996 and glutamate 1020. Chloride is bound by residues tryptophan 1094 and arginine 1098. Histidine 1122 acts as the Proton donor 2 in catalysis. Arginine 1131 lines the chloride pocket. Cysteine 1147 and cysteine 1159 form a disulfide bridge. N-linked (GlcNAc...) asparagine glycosylation is present at asparagine 1195. A juxtamembrane stalk region spans residues 1219–1260 (HGEKLGWPQYTWTPNSARSEGSLPDSGRVNFLGMNLDAQQAR). A helical transmembrane segment spans residues 1261 to 1281 (VGQWVLLFLGVALLLASLGLT). Residues 1282–1310 (QRLFSIRYQSLRQPHHGPQFGSEVELRHS) are Cytoplasmic-facing. A Phosphoserine modification is found at serine 1303.

Belongs to the peptidase M2 family. In terms of assembly, monomer and homodimer; homodimerizes following binding to an inhibitor. Interacts with calmodulin (CALM1, CALM2 or CALM3); interaction takes place in the cytoplasmic region and regulates phosphorylation and proteolytic cleavage. Zn(2+) is required as a cofactor. It depends on chloride as a cofactor. In terms of processing, N-glycosylated. Phosphorylated by CK2 on Ser-1303; which allows membrane retention. Phosphorylated on tyrosine residues on its extracellular part, promoting cleavage by secretase enzymes and formation of the soluble form (Angiotensin-converting enzyme, soluble form). Post-translationally, produced following proteolytic cleavage by secretase enzymes that cleave the transmembrane form in the juxtamembrane stalk region upstream of the transmembrane region. Cleavage can take place at different sites of the juxtamembrane stalk region. As to expression, testis-specific isoform is expressed in spermatocytes, adult testis.

The protein localises to the cell membrane. Its subcellular location is the cytoplasm. The protein resides in the secreted. It catalyses the reaction Release of a C-terminal dipeptide, oligopeptide-|-Xaa-Yaa, when Xaa is not Pro, and Yaa is neither Asp nor Glu. Thus, conversion of angiotensin I to angiotensin II, with increase in vasoconstrictor activity, but no action on angiotensin II.. It carries out the reaction angiotensin I + H2O = L-histidyl-L-leucine + angiotensin II. The catalysed reaction is bradykinin + H2O = L-Phe-L-Arg + bradykinin(1-7). The enzyme catalyses substance P + H2O = substance P(1-9) + L-Leu-L-Met-NH2. It catalyses the reaction substance P + H2O = substance P(1-8) + Gly-L-Leu-L-Met-NH2. It carries out the reaction substance P + H2O = L-Phe-L-Phe-Gly-L-Leu-L-Met-NH2 + substance P(1-6). The catalysed reaction is neurotensin + H2O = neurotensin(1-11) + L-isoleucyl-L-leucine. The enzyme catalyses goralatide + H2O = N-acetyl-L-seryl-L-aspartate + L-lysyl-L-proline. It catalyses the reaction Met-enkephalin + H2O = L-phenylalanyl-L-methionine + L-tyrosylglycylglycine. It carries out the reaction Leu-enkephalin + H2O = L-tyrosylglycylglycine + L-phenylalanyl-L-leucine. The catalysed reaction is Met-enkephalin-Arg-Phe + H2O = L-arginyl-L-phenylalanine + Met-enkephalin. With respect to regulation, the dipeptidyl carboxypeptidase activity is strongly activated by chloride. Specifically inhibited by lisinopril. Inhibited by mixanpril, an orally-active drug used for the treatment of hypertension. Strongly inhibited by lisinopril and captopril. Its function is as follows. Dipeptidyl carboxypeptidase that removes dipeptides from the C-terminus of a variety of circulating hormones, such as angiotensin I, bradykinin or enkephalins, thereby playing a key role in the regulation of blood pressure, electrolyte homeostasis or synaptic plasticity. Composed of two similar catalytic domains, each possessing a functional active site, with different selectivity for substrates. Plays a major role in the angiotensin-renin system that regulates blood pressure and sodium retention by the kidney by converting angiotensin I to angiotensin II, resulting in an increase of the vasoconstrictor activity of angiotensin. Also able to inactivate bradykinin, a potent vasodilator, and therefore enhance the blood pressure response. Acts as a regulator of synaptic transmission by mediating cleavage of neuropeptide hormones, such as substance P, neurotensin or enkephalins. Catalyzes degradation of different enkephalin neuropeptides (Met-enkephalin, Leu-enkephalin, Met-enkephalin-Arg-Phe and possibly Met-enkephalin-Arg-Gly-Leu). Acts as a regulator of synaptic plasticity in the nucleus accumbens of the brain by mediating cleavage of Met-enkephalin-Arg-Phe, a strong ligand of Mu-type opioid receptor OPRM1, into Met-enkephalin. Met-enkephalin-Arg-Phe cleavage by ACE decreases activation of OPRM1, leading to long-term synaptic potentiation of glutamate release. Also acts as a regulator of hematopoietic stem cell differentiation by mediating degradation of hemoregulatory peptide N-acetyl-SDKP (AcSDKP). Acts as a regulator of cannabinoid signaling pathway by mediating degradation of hemopressin, an antagonist peptide of the cannabinoid receptor CNR1. Involved in amyloid-beta metabolism by catalyzing degradation of Amyloid-beta protein 40 and Amyloid-beta protein 42 peptides, thereby preventing plaque formation. Catalyzes cleavage of cholecystokinin (maturation of Cholecystokinin-8 and Cholecystokinin-5) and Gonadoliberin-1 (both maturation and degradation) hormones. Degradation of hemoregulatory peptide N-acetyl-SDKP (AcSDKP) and amyloid-beta proteins is mediated by the N-terminal catalytic domain, while angiotensin I and cholecystokinin cleavage is mediated by the C-terminal catalytic region. Functionally, soluble form that is released in blood plasma and other body fluids following proteolytic cleavage in the juxtamembrane stalk region. In terms of biological role, isoform produced by alternative promoter usage that is specifically expressed in spermatocytes and adult testis, and which is required for male fertility. In contrast to somatic isoforms, only contains one catalytic domain. Acts as a dipeptidyl carboxypeptidase that removes dipeptides from the C-terminus of substrates. The identity of substrates that are needed for male fertility is unknown. May also have a glycosidase activity which releases GPI-anchored proteins from the membrane by cleaving the mannose linkage in the GPI moiety. The GPIase activity was reported to be essential for the egg-binding ability of the sperm. This activity is however unclear and has been challenged by other groups, suggesting that it may be indirect. The sequence is that of Angiotensin-converting enzyme from Oryctolagus cuniculus (Rabbit).